The primary structure comprises 545 residues: Glucose-6-phosphate isomerase (545 aa).

Residue Glu-349 is the Proton donor of the active site. Residues His-380 and Lys-509 contribute to the active site.

This sequence belongs to the GPI family.

It is found in the cytoplasm. The enzyme catalyses alpha-D-glucose 6-phosphate = beta-D-fructose 6-phosphate. It participates in carbohydrate biosynthesis; gluconeogenesis. Its pathway is carbohydrate degradation; glycolysis; D-glyceraldehyde 3-phosphate and glycerone phosphate from D-glucose: step 2/4. Its function is as follows. Catalyzes the reversible isomerization of glucose-6-phosphate to fructose-6-phosphate. The sequence is that of Glucose-6-phosphate isomerase from Chelativorans sp. (strain BNC1).